We begin with the raw amino-acid sequence, 224 residues long: Cytidylate kinase (224 aa).

12–20 (GPSGAGKGT) contacts ATP.

Belongs to the cytidylate kinase family. Type 1 subfamily.

The protein resides in the cytoplasm. The enzyme catalyses CMP + ATP = CDP + ADP. It carries out the reaction dCMP + ATP = dCDP + ADP. This chain is Cytidylate kinase, found in Aliivibrio salmonicida (strain LFI1238) (Vibrio salmonicida (strain LFI1238)).